Reading from the N-terminus, the 66-residue chain is Small archaeal modifier protein 2 (66 aa).

Lysine 58 is covalently cross-linked (Glycyl lysine isopeptide (Lys-Gly) (interchain with G-Cter in SAMP2)). At glycine 66 the chain carries 1-thioglycine; alternate. A Glycyl adenylate; alternate modification is found at glycine 66. A Glycyl lysine isopeptide (Gly-Lys) (interchain with K-? in acceptor proteins); alternate cross-link involves residue glycine 66.

In terms of assembly, monomer. Monomeric and polymeric forms interact with NcsA. Post-translationally, the C-terminal glycine is likely acyl-adenylated (-COAMP) by UbaA, and also probably thiocarboxylated (-COSH) to function in sulfur transfer.

Its function is as follows. Functions as a protein modifier covalently attached to lysine residues of substrate proteins, as well as a sulfur carrier in tRNA thiolation. The protein modification process is termed sampylation and involves the formation of an isopeptide bond between the SAMP2 C-terminal glycine carboxylate and the epsilon-amino group of lysine residues on target proteins. Is able to form polymeric chains with itself at Lys-58, similar to ubiquitin and other ubiquitin-like proteins. May serve as a proteolytic signal in the cell to target proteins for degradation by proteasomes. The polypeptide is Small archaeal modifier protein 2 (samp2) (Haloferax volcanii (strain ATCC 29605 / DSM 3757 / JCM 8879 / NBRC 14742 / NCIMB 2012 / VKM B-1768 / DS2) (Halobacterium volcanii)).